Consider the following 427-residue polypeptide: G2/mitotic-specific cyclin-3 (427 aa).

Polar residues predominate over residues 1-12; that stretch reads MHHNSQSLSSGH. Disordered stretches follow at residues 1-29 and 89-126; these read MHHNSQSLSSGHIRSPEDENVAPIGNLKH and SVAQRKEADHNDLLTDREQEEPVEDDGESEEDEEEDQE. Residues 89–105 show a composition bias toward basic and acidic residues; it reads SVAQRKEADHNDLLTDR. Positions 106 to 126 are enriched in acidic residues; that stretch reads EQEEPVEDDGESEEDEEEDQE.

The protein belongs to the cyclin family. Cyclin AB subfamily.

In terms of biological role, essential for the control of the cell cycle at the G2/M (mitosis) transition. Interacts with the CDC2 protein kinase to form MPF. G2/M cyclins accumulate steadily during G2 and are abruptly destroyed at mitosis. The protein is G2/mitotic-specific cyclin-3 (CLB3) of Saccharomyces cerevisiae (strain ATCC 204508 / S288c) (Baker's yeast).